Here is a 412-residue protein sequence, read N- to C-terminus: DNA polymerase IV (412 aa).

The UmuC domain maps to 12–193 (ILHVDMNCFF…LPVGAMHGIG (182 aa)). Mg(2+) contacts are provided by Asp-16 and Asp-112. Glu-113 is a catalytic residue. Residues 235 to 257 (KGMDDREVDPSQMGQHKSVGNSM) are disordered. A compositionally biased stretch (polar residues) spans 246–257 (QMGQHKSVGNSM).

This sequence belongs to the DNA polymerase type-Y family. Monomer. Requires Mg(2+) as cofactor.

The protein resides in the cytoplasm. It carries out the reaction DNA(n) + a 2'-deoxyribonucleoside 5'-triphosphate = DNA(n+1) + diphosphate. Poorly processive, error-prone DNA polymerase involved in untargeted mutagenesis. Copies undamaged DNA at stalled replication forks, which arise in vivo from mismatched or misaligned primer ends. These misaligned primers can be extended by PolIV. Exhibits no 3'-5' exonuclease (proofreading) activity. May be involved in translesional synthesis, in conjunction with the beta clamp from PolIII. The polypeptide is DNA polymerase IV (Bacillus anthracis).